Consider the following 152-residue polypeptide: Deoxyuridine 5'-triphosphate nucleotidohydrolase (152 aa).

Substrate-binding positions include 71–73 (RSG), Asn-84, and 88–90 (TVD).

It belongs to the dUTPase family. Mg(2+) serves as cofactor.

The enzyme catalyses dUTP + H2O = dUMP + diphosphate + H(+). It participates in pyrimidine metabolism; dUMP biosynthesis; dUMP from dCTP (dUTP route): step 2/2. Its function is as follows. This enzyme is involved in nucleotide metabolism: it produces dUMP, the immediate precursor of thymidine nucleotides and it decreases the intracellular concentration of dUTP so that uracil cannot be incorporated into DNA. The chain is Deoxyuridine 5'-triphosphate nucleotidohydrolase from Maricaulis maris (strain MCS10) (Caulobacter maris).